The primary structure comprises 85 residues: Conotoxin Cap15a (85 aa).

An N-terminal signal peptide occupies residues 1–23 (MEKLTFLILVATVLLTIHVLVQS). Residues 24–49 (VGDKHLKRRPKQYATKHLSALMRGHR) constitute a propeptide that is removed on maturation. Gln-50 carries the pyrrolidone carboxylic acid modification.

This sequence belongs to the conotoxin O2 superfamily. Post-translationally, contains 4 disulfide bonds. Expressed by the venom duct.

Its subcellular location is the secreted. The polypeptide is Conotoxin Cap15a (Conus capitaneus (Captain cone)).